The sequence spans 289 residues: MPQHDQLHRYLFENFAVRGELVTVSETLQQILENHDYPQPVKNVLAELLVATSLLTATLKFDGDITVQLQGDGPMNLAVINGNNNQQMRGVARVQGEIPENADLKTLVGNGYVVITITPSEGERYQGVVGLEGDTLAACLEDYFMRSEQLPTRLFIRTGDVDGKPAAGGMLLQVMPAQNTQQDDFDHLATLTETIKTEELLTLPANEVLWRLYHEEEVTVYDPQDVEFKCTCSRERCADALKTLPDEEVDSILAEDGEIDMHCDYCGNHYLFNAMDIAEIRNNASPADP.

2 disulfides stabilise this stretch: cysteine 230-cysteine 232 and cysteine 263-cysteine 266.

It belongs to the HSP33 family. Post-translationally, under oxidizing conditions two disulfide bonds are formed involving the reactive cysteines. Under reducing conditions zinc is bound to the reactive cysteines and the protein is inactive.

It is found in the cytoplasm. Its function is as follows. Redox regulated molecular chaperone. Protects both thermally unfolding and oxidatively damaged proteins from irreversible aggregation. Plays an important role in the bacterial defense system toward oxidative stress. The chain is 33 kDa chaperonin from Shigella flexneri serotype 5b (strain 8401).